Reading from the N-terminus, the 573-residue chain is Globulin-1 S allele (573 aa).

The or 21 signal peptide spans 1–18; that stretch reads MVSARIVVLLAVLLCAAA. Positions 19-86 are excised as a propeptide; the sequence is AVASSWEDDN…DRSGEGSSED (68 aa). Residues 65 to 102 form a disordered region; the sequence is EKRQERSRHEADDRSGEGSSEDEREREQEKEEKQKDRR. Cupin type-1 domains lie at 104–262 and 311–493; these read YVFD…DRLE and YSLL…EEVD. Positions 288 to 315 are disordered; the sequence is RHASEGGHGPHWPLPPFGESRGPYSLLD. Asn349 carries an N-linked (GlcNAc...) asparagine glycan. Disordered regions lie at residues 382–416 and 498–573; these read PHRQ…EVGQ and SRRE…TARM. Positions 390 to 402 are enriched in basic and acidic residues; that stretch reads ESERERGKGRRSE. The span at 403-413 shows a compositional bias: acidic residues; it reads EEEESSEEQEE. Composition is skewed to basic and acidic residues over residues 525–542 and 549–561; these read EERH…REER and REGR…REEV.

Belongs to the 7S seed storage protein family. Three protein-processing steps occur in the formation of the mature protein from the primary translation product.

The chain is Globulin-1 S allele (GLB1) from Zea mays (Maize).